The chain runs to 650 residues: MSRNLDSPVQTQMAVAVFKTPLTGASKMEGKQHHKHQHLQRQSSGRRVFVQTETGCVLGMELDRSDNVHTVKRRLQIALNFPTEESSLTYGDMVLTNDLSAVRNDSPLLLKRNFMHRSSSTPCLSPTGRDLQQKDRSGPIEILGHSDCFSIVKHMVKDIVKAMKMGVEPLPVHSGLGGAYYFRNKRGESVAIVKPTDEEPFAPNNPKGFVGKALGQPGLKSSVRVGETGFREVAAYLLDYGRFANVPPTALVKITHSVFNVNDGVKGNKPREKKLVSKIASFQKFVAHDFDASDHGTSSFPVTSVHRIGILDIRIFNTDRHGGNLLVKKLDGVGMFGQVELIPIDHGLCLPETLEDPYFEWIHWPQASLPFSDEEVDYIQSLDPVKDCDMLRRELPMIREACLRVLVLCTIFLKEASAYGLCLAEIGEMMTREFRPGEEEPSELEVVCIEAKRSVTERDVFSPRSDVVGEAEFQFDLDCDDLESVYSSKIQLTDDYFTKNPFSNGRSSLGKLEESIKEEEEDEEEEEDKTENTVPMIIMKDSFFSSAAFHDKAPSLSKLSTSMKNTHLSDTTRKNPKPLTRGKSENTSSGHKSANEQLPVSASFVKVADMKEDEWVLFLERFQELLGPAFAKRKTATLSKRQRLGTSCQF.

Positions 46–103 (RRVFVQTETGCVLGMELDRSDNVHTVKRRLQIALNFPTEESSLTYGDMVLTNDLSAVR) constitute a Ubiquitin-like; degenerate domain. A PI3K/PI4K catalytic domain is found at 166-463 (GVEPLPVHSG…SVTERDVFSP (298 aa)). Residues 172–178 (VHSGLGG) are G-loop. ATP is bound by residues 173 to 179 (HSGLGGA), Lys-194, and 283 to 286 (QKFV). A catalytic loop region spans residues 316–324 (FNTDRHGGN). The segment at 343-369 (PIDHGLCLPETLEDPYFEWIHWPQASL) is activation loop. Asp-345 lines the ATP pocket. 2 disordered regions span residues 508–534 (SLGK…ENTV) and 560–595 (STSM…KSAN). Residues 516–529 (IKEEEEDEEEEEDK) show a composition bias toward acidic residues. 2 stretches are compositionally biased toward polar residues: residues 560 to 569 (STSMKNTHLS) and 585 to 595 (ENTSSGHKSAN). The residue at position 593 (Ser-593) is a Phosphoserine.

It belongs to the PI3/PI4-kinase family. Type II PI4K subfamily.

It carries out the reaction a 1,2-diacyl-sn-glycero-3-phospho-(1D-myo-inositol) + ATP = a 1,2-diacyl-sn-glycero-3-phospho-(1D-myo-inositol 4-phosphate) + ADP + H(+). Its function is as follows. The phosphorylation of phosphatidylinositol (PI) to PI4P is the first committed step in the generation of phosphatidylinositol 4,5-bisphosphate (PIP2), a precursor of the second messenger inositol 1,4,5-trisphosphate (InsP3). Undergoes autophosphorylation and phosphorylates serine/threonine residues of protein substrates. The protein is Phosphatidylinositol 4-kinase gamma 7 of Arabidopsis thaliana (Mouse-ear cress).